The sequence spans 432 residues: Neuronal pentraxin-1 (432 aa).

A signal peptide spans methionine 1–alanine 22. Residues arginine 88–serine 122 form a disordered region. N-linked (GlcNAc...) asparagine glycosylation is found at asparagine 154 and asparagine 193. Positions aspartate 226–cysteine 428 constitute a Pentraxin (PTX) domain. A disulfide bridge links cysteine 256 with cysteine 316. Residues asparagine 280, glutamate 358, glutamine 359, aspartate 360, and glutamine 370 each coordinate Ca(2+).

Homooligomer or heterooligomer (probably pentamer) with neuronal pentraxin receptor (NPTXR). The cofactor is Ca(2+). As to expression, expressed in brain and kidney.

Its subcellular location is the secreted. The protein localises to the cytoplasmic vesicle. It localises to the secretory vesicle. The protein resides in the endoplasmic reticulum. Its function is as follows. May be involved in mediating uptake of synaptic material during synapse remodeling or in mediating the synaptic clustering of AMPA glutamate receptors at a subset of excitatory synapses. This chain is Neuronal pentraxin-1 (Nptx1), found in Mus musculus (Mouse).